The chain runs to 715 residues: Fatty acid oxidation complex subunit alpha (715 aa).

The interval 1–190 (MIYQGKAITV…KVGAVDAVVA (190 aa)) is enoyl-CoA hydratase/isomerase. Residue aspartate 297 participates in substrate binding. The tract at residues 312-715 (KDVKLAAVLG…MAKNGQKFFG (404 aa)) is 3-hydroxyacyl-CoA dehydrogenase. NAD(+) is bound by residues methionine 325, aspartate 344, 401–403 (VVE), lysine 408, and serine 430. Residue histidine 451 is the For 3-hydroxyacyl-CoA dehydrogenase activity of the active site. Asparagine 454 contributes to the NAD(+) binding site. Substrate contacts are provided by asparagine 501 and tyrosine 660.

In the N-terminal section; belongs to the enoyl-CoA hydratase/isomerase family. This sequence in the C-terminal section; belongs to the 3-hydroxyacyl-CoA dehydrogenase family. In terms of assembly, heterotetramer of two alpha chains (FadB) and two beta chains (FadA).

The catalysed reaction is a (3S)-3-hydroxyacyl-CoA + NAD(+) = a 3-oxoacyl-CoA + NADH + H(+). It catalyses the reaction a (3S)-3-hydroxyacyl-CoA = a (2E)-enoyl-CoA + H2O. It carries out the reaction a 4-saturated-(3S)-3-hydroxyacyl-CoA = a (3E)-enoyl-CoA + H2O. The enzyme catalyses (3S)-3-hydroxybutanoyl-CoA = (3R)-3-hydroxybutanoyl-CoA. The catalysed reaction is a (3Z)-enoyl-CoA = a 4-saturated (2E)-enoyl-CoA. It catalyses the reaction a (3E)-enoyl-CoA = a 4-saturated (2E)-enoyl-CoA. It participates in lipid metabolism; fatty acid beta-oxidation. Involved in the aerobic and anaerobic degradation of long-chain fatty acids via beta-oxidation cycle. Catalyzes the formation of 3-oxoacyl-CoA from enoyl-CoA via L-3-hydroxyacyl-CoA. It can also use D-3-hydroxyacyl-CoA and cis-3-enoyl-CoA as substrate. The chain is Fatty acid oxidation complex subunit alpha from Pseudomonas paraeruginosa (strain DSM 24068 / PA7) (Pseudomonas aeruginosa (strain PA7)).